The sequence spans 234 residues: Sugar fermentation stimulation protein homolog (234 aa).

Belongs to the SfsA family.

The sequence is that of Sugar fermentation stimulation protein homolog from Shewanella baltica (strain OS223).